A 120-amino-acid polypeptide reads, in one-letter code: NAD(P)H-quinone oxidoreductase subunit 3, chloroplastic (120 aa).

The next 3 helical transmembrane spans lie at 7 to 27 (YDTF…AFSI), 64 to 84 (MFAL…PWAM), and 88 to 108 (ILGL…IVGL).

It belongs to the complex I subunit 3 family. As to quaternary structure, NDH is composed of at least 16 different subunits, 5 of which are encoded in the nucleus.

It is found in the plastid. The protein resides in the chloroplast thylakoid membrane. It carries out the reaction a plastoquinone + NADH + (n+1) H(+)(in) = a plastoquinol + NAD(+) + n H(+)(out). It catalyses the reaction a plastoquinone + NADPH + (n+1) H(+)(in) = a plastoquinol + NADP(+) + n H(+)(out). Its function is as follows. NDH shuttles electrons from NAD(P)H:plastoquinone, via FMN and iron-sulfur (Fe-S) centers, to quinones in the photosynthetic chain and possibly in a chloroplast respiratory chain. The immediate electron acceptor for the enzyme in this species is believed to be plastoquinone. Couples the redox reaction to proton translocation, and thus conserves the redox energy in a proton gradient. In Cryptomeria japonica (Japanese cedar), this protein is NAD(P)H-quinone oxidoreductase subunit 3, chloroplastic.